A 145-amino-acid polypeptide reads, in one-letter code: D-aminoacyl-tRNA deacylase (145 aa).

Residues 137–138 (GP) carry the Gly-cisPro motif, important for rejection of L-amino acids motif.

This sequence belongs to the DTD family. In terms of assembly, homodimer.

The protein resides in the cytoplasm. It carries out the reaction glycyl-tRNA(Ala) + H2O = tRNA(Ala) + glycine + H(+). The catalysed reaction is a D-aminoacyl-tRNA + H2O = a tRNA + a D-alpha-amino acid + H(+). An aminoacyl-tRNA editing enzyme that deacylates mischarged D-aminoacyl-tRNAs. Also deacylates mischarged glycyl-tRNA(Ala), protecting cells against glycine mischarging by AlaRS. Acts via tRNA-based rather than protein-based catalysis; rejects L-amino acids rather than detecting D-amino acids in the active site. By recycling D-aminoacyl-tRNA to D-amino acids and free tRNA molecules, this enzyme counteracts the toxicity associated with the formation of D-aminoacyl-tRNA entities in vivo and helps enforce protein L-homochirality. In Escherichia coli O139:H28 (strain E24377A / ETEC), this protein is D-aminoacyl-tRNA deacylase.